The following is a 389-amino-acid chain: Major outer membrane porin (389 aa).

It belongs to the chlamydial porin (CP) (TC 1.B.2) family. Part of a disulfide cross-linked outer membrane complex (COMC) composed of the major outer membrane porin (MOMP), the small cysteine-rich protein (OmcA) and the large cysteine-rich periplasmic protein (OmcB).

Its subcellular location is the cell outer membrane. Its function is as follows. In elementary bodies (EBs, the infectious stage, which is able to survive outside the host cell) provides the structural integrity of the outer envelope through disulfide cross-links with the small cysteine-rich protein and the large cysteine-rich periplasmic protein. It has been described in publications as the Sarkosyl-insoluble COMC (Chlamydia outer membrane complex), and serves as the functional equivalent of peptidoglycan. Functionally, permits diffusion of specific solutes through the outer membrane. In Chlamydia pneumoniae (Chlamydophila pneumoniae), this protein is Major outer membrane porin (ompA).